Reading from the N-terminus, the 558-residue chain is FRIGIDA-like protein 3 (558 aa).

A coiled-coil region spans residues 9–102; it reads SLMDSTSSKI…ALERLQKKRD (94 aa). The span at 454-463 shows a compositional bias: basic and acidic residues; sequence AKADKKRATE. The tract at residues 454–494 is disordered; the sequence is AKADKKRATEPMKPQPKRPRGAQPRVTDNNNNINNNKTGYG.

This sequence belongs to the Frigida family.

This Arabidopsis thaliana (Mouse-ear cress) protein is FRIGIDA-like protein 3 (FRL3).